The chain runs to 318 residues: Ubiquitin-like domain-containing CTD phosphatase 1 (318 aa).

Ala-2 is modified (N-acetylalanine). The Ubiquitin-like domain maps to 3–81; that stretch reads LPIIVKWGGQ…IMMMGTREES (79 aa). Lys-117 carries the N6-acetyllysine modification. The 162-residue stretch at 133–294 folds into the FCP1 homology domain; the sequence is PREGKKLLVL…LKLTQYLKEI (162 aa). Mg(2+) is bound by residues Asp-143, Asp-145, and Asp-253.

It depends on Mg(2+) as a cofactor.

The protein localises to the nucleus. It catalyses the reaction O-phospho-L-seryl-[protein] + H2O = L-seryl-[protein] + phosphate. The enzyme catalyses O-phospho-L-threonyl-[protein] + H2O = L-threonyl-[protein] + phosphate. Its function is as follows. Dephosphorylates 26S nuclear proteasomes, thereby decreasing their proteolytic activity. Recruited to the 19S regulatory particle of the 26S proteasome through its interaction with 19S component PSMD2/RPN1. Once recruited, dephosphorylates 19S component PSMC2/RPT1 which impairs PSMC2 ATPase activity and disrupts 26S proteasome assembly. Has also been reported to stimulate the proteolytic activity of the 26S proteasome. This Pongo abelii (Sumatran orangutan) protein is Ubiquitin-like domain-containing CTD phosphatase 1 (UBLCP1).